The following is a 1515-amino-acid chain: Adhesion G protein-coupled receptor L1 (1515 aa).

Positions 1 to 24 are cleaved as a signal peptide; the sequence is MARLAAALWSLCVTTVLVTSATQG. Topologically, residues 25–857 are extracellular; the sequence is LSRAGLPFGL…EIYQGRINEL (833 aa). Residues 40 to 129 form the SUEL-type lectin domain; it reads ACEGYPIELR…KYLEVQYDCV (90 aa). 5 disulfides stabilise this stretch: C41–C71, C50–C128, C83–C115, C96–C102, and C140–C322. E42 contributes to the alpha-L-rhamnose binding site. The N-linked (GlcNAc...) asparagine glycan is linked to N98. Residue 117 to 120 participates in alpha-L-rhamnose binding; sequence GTYK. The Olfactomedin-like domain maps to 139–398; the sequence is VCPGTLQKVL…VVRYSLEFGP (260 aa). Residues 400 to 468 form a disordered region; that stretch reads DPSAGPATSP…APAPSTRRPP (69 aa). The span at 405–441 shows a compositional bias: low complexity; it reads PATSPPLSTTTTARPTPLTSTASPAATTPLRRAPLTT. Residues 453-468 show a composition bias toward pro residues; it reads DLPPATAPAPSTRRPP. Intrachain disulfides connect C480/C515 and C503/C532. 6 N-linked (GlcNAc...) asparagine glycosylation sites follow: N531, N640, N741, N800, N805, and N826. Residues 669 to 850 enclose the GAIN-B domain; the sequence is PARFLAAKQN…AVLMAHREIY (182 aa). Cystine bridges form between C801–C832 and C820–C834. The GPS stretch occupies residues 801 to 850; it reads CSFWNYSERSMLGYWSTQGCRLVESNKTHTTCACSHLTNFAVLMAHREIY. A helical membrane pass occupies residues 858-878; that stretch reads LLSVITWVGIVISLVCLAICI. Residues 879–892 are Cytoplasmic-facing; sequence STFCFLRGLQTDRN. A helical transmembrane segment spans residues 893-913; the sequence is TIHKNLCINLFLAELLFLVGI. At 914–919 the chain is on the extracellular side; sequence DKTQYE. Residues 920–940 form a helical membrane-spanning segment; that stretch reads VACPIFAGLLHYFFLAAFSWL. Topologically, residues 941-964 are cytoplasmic; it reads CLEGVHLYLLLVEVFESEYSRTKY. The chain crosses the membrane as a helical span at residues 965 to 985; that stretch reads YYLGGYCFPALVVGIAAAIDY. Residues 986 to 1001 are Extracellular-facing; the sequence is RSYGTEKACWLRVDNY. A helical membrane pass occupies residues 1002 to 1022; that stretch reads FIWSFIGPVSFVIVVNLVFLM. Topologically, residues 1023–1049 are cytoplasmic; that stretch reads VTLHKMIRSSSVLKPDSSRLDNIKSWA. A helical transmembrane segment spans residues 1050–1070; that stretch reads LGAIALLFLLGLTWAFGLLFI. Topologically, residues 1071–1074 are extracellular; the sequence is NKES. The chain crosses the membrane as a helical span at residues 1075–1095; that stretch reads VVMAYLFTTFNAFQGVFIFVF. The Cytoplasmic portion of the chain corresponds to 1096-1515; that stretch reads HCALQKKVHK…DGQMQLVTSL (420 aa). The interval 1144–1184 is disordered; the sequence is TQVPGQGRHIHQVSLGPRGRSALPESQKDPGGQSGPGDPLT. R1237 is subject to Omega-N-methylarginine. S1263 carries the phosphoserine modification. Disordered stretches follow at residues 1291–1316, 1337–1369, 1401–1470, and 1492–1515; these read FNNS…RGRN, RGAS…PGGA, ESES…SRPP, and YLAA…VTSL. Pro residues-rich tracts occupy residues 1345-1356 and 1449-1461; these read GPPPEPPVPPVP and ALPP…PGPP. A phosphoserine mark is found at S1497 and S1514.

Belongs to the G-protein coupled receptor 2 family. Adhesion G-protein coupled receptor (ADGR) subfamily. In terms of assembly, forms a heterodimer, consisting of a large extracellular region (p120) non-covalently linked to a seven-transmembrane moiety (p85). Interacts with syntaxin and with proteins of the SHANK family via the PDZ domain. Isoform 2 interacts with TENM2. Interacts (via extracellular domain) with FLRT1, FLRT2 and FLRT3 (via extracellular domain). In terms of processing, autoproteolytically cleaved into 2 subunits, an extracellular subunit and a seven-transmembrane subunit. This proteolytic processing takes place early in the biosynthetic pathway, either in the endoplasmic reticulum or in the early compartment of the Golgi apparatus. As to expression, expressed in the brain (at protein level). Brain specific distribution but low levels are also detected in most tissues.

The protein resides in the cell membrane. It localises to the cell projection. The protein localises to the axon. Its subcellular location is the growth cone. It is found in the synapse. The protein resides in the presynaptic cell membrane. It localises to the synaptosome. In terms of biological role, calcium-independent receptor of high affinity for alpha-latrotoxin, an excitatory neurotoxin present in black widow spider venom which triggers massive exocytosis from neurons and neuroendocrine cells. Receptor probably implicated in the regulation of exocytosis. Its function is as follows. Receptor for TENM2 that mediates heterophilic synaptic cell-cell contact and postsynaptic specialization. The protein is Adhesion G protein-coupled receptor L1 of Rattus norvegicus (Rat).